The sequence spans 168 residues: Mediator of RNA polymerase II transcription subunit 11 (168 aa).

Residues Glu-126 to Glu-168 form a disordered region. Positions Asn-130–Ile-156 are enriched in polar residues. Basic and acidic residues predominate over residues Asn-157–Glu-168.

It belongs to the Mediator complex subunit 11 family. As to quaternary structure, component of the Mediator complex.

It is found in the nucleus. Component of the Mediator complex, a coactivator involved in the regulated transcription of nearly all RNA polymerase II-dependent genes. Mediator functions as a bridge to convey information from gene-specific regulatory proteins to the basal RNA polymerase II transcription machinery. Mediator is recruited to promoters by direct interactions with regulatory proteins and serves as a scaffold for the assembly of a functional pre-initiation complex with RNA polymerase II and the general transcription factors. The polypeptide is Mediator of RNA polymerase II transcription subunit 11 (MED11) (Candida albicans (strain SC5314 / ATCC MYA-2876) (Yeast)).